The following is a 142-amino-acid chain: Transcription antitermination protein NusB (142 aa).

This sequence belongs to the NusB family.

Its function is as follows. Involved in transcription antitermination. Required for transcription of ribosomal RNA (rRNA) genes. Binds specifically to the boxA antiterminator sequence of the ribosomal RNA (rrn) operons. The protein is Transcription antitermination protein NusB of Streptococcus mutans serotype c (strain ATCC 700610 / UA159).